A 223-amino-acid polypeptide reads, in one-letter code: MYSVVALGGSVVNVDKPERIKETAEILRNGLDSGLKICVVVGGGPTARRYINVARNLGTPETLLDEMGIAVTRLNAMLLGAALGLHDLHVPETPVEAARIVRRNGVAVCGGTHPGHTTDAVAAMIAELLEGPLVIVTNVDGVYDKDPSEPGARKLRELRPEELEELAVRAELKAGGSFVVDPLAAKMISRGQIVTHVVSWEDFRSRGLENVVRGRHNGTIIEG.

9–10 (GS) is an ATP binding site. Gly43 lines the UMP pocket. Residues Gly44 and Arg48 each coordinate ATP. UMP is bound by residues Asp65 and 112–118 (THPGHTT). Thr137, Asn138, Tyr143, and Asp146 together coordinate ATP.

This sequence belongs to the UMP kinase family. As to quaternary structure, homohexamer.

Its subcellular location is the cytoplasm. It catalyses the reaction UMP + ATP = UDP + ADP. It participates in pyrimidine metabolism; CTP biosynthesis via de novo pathway; UDP from UMP (UMPK route): step 1/1. Inhibited by UTP. Catalyzes the reversible phosphorylation of UMP to UDP. In Methanopyrus kandleri (strain AV19 / DSM 6324 / JCM 9639 / NBRC 100938), this protein is Uridylate kinase.